We begin with the raw amino-acid sequence, 394 residues long: Na(+)/H(+) antiporter NhaA (394 aa).

Helical transmembrane passes span alanine 14 to leucine 34, leucine 59 to valine 79, valine 95 to phenylalanine 115, glycine 125 to glycine 145, valine 154 to phenylalanine 174, valine 179 to tryptophan 199, leucine 213 to valine 233, glycine 254 to valine 274, isoleucine 292 to valine 312, isoleucine 328 to leucine 348, and leucine 363 to valine 383.

It belongs to the NhaA Na(+)/H(+) (TC 2.A.33) antiporter family.

It localises to the cell inner membrane. The enzyme catalyses Na(+)(in) + 2 H(+)(out) = Na(+)(out) + 2 H(+)(in). Na(+)/H(+) antiporter that extrudes sodium in exchange for external protons. The polypeptide is Na(+)/H(+) antiporter NhaA (Yersinia pestis bv. Antiqua (strain Antiqua)).